The chain runs to 350 residues: ALA-interacting subunit 5 (350 aa).

A disordered region spans residues 1 to 23 (MSSTAASSTVGGGGSSEISGVKK). Position 2 is an N-acetylserine (Ser-2). The helical transmembrane segment at 50-70 (VILTFLVAGVVFIPLGVICLF) threads the bilayer. Asn-181 and Asn-231 each carry an N-linked (GlcNAc...) asparagine glycan. Residues 304-324 (FLGIAYLTVGSICLFLAVTFA) traverse the membrane as a helical segment.

The protein belongs to the CDC50/LEM3 family. In terms of assembly, interacts with ALA2 and ALA3 in a heterologous system. In terms of tissue distribution, expressed in roots, leaves, stems, flowers and siliques.

The protein resides in the golgi apparatus membrane. It is found in the prevacuolar compartment membrane. Its subcellular location is the endoplasmic reticulum membrane. Functionally, required for the lipid transport activity of the ALA/ALIS P4-ATPase complex. In Arabidopsis thaliana (Mouse-ear cress), this protein is ALA-interacting subunit 5 (ALIS5).